An 840-amino-acid polypeptide reads, in one-letter code: E3 ubiquitin-protein ligase SH3RF1 (840 aa).

Residues 12 to 53 form an RING-type zinc finger; that stretch reads CPVCLERLDASAKVLPCQHTFCKRCLLGIVGSRNELRCPECR. Residues 105-129 are disordered; that stretch reads VTCSPKDGPSSQGGPQPRAQAWSPP. SH3 domains are found at residues 134–193 and 196–259; these read PQLP…IIKP and QPPP…FNSA. 6 disordered regions span residues 267 to 324, 394 to 442, 516 to 545, 578 to 633, 652 to 723, and 744 to 773; these read DQPP…RHSM, TLNP…PRPS, GPAS…VAGG, QARS…AASG, AASL…LGAE, and MAPG…SLGP. A compositionally biased stretch (low complexity) spans 273 to 282; sequence GVAAGEGALA. Polar residues predominate over residues 283 to 292; the sequence is TTPSSTTTKQ. The segment at 292 to 362 is interaction with RAC1; that stretch reads QPDGKKNTKK…APSQVHISTT (71 aa). Ser304 carries the phosphoserine modification. Composition is skewed to low complexity over residues 307-320 and 405-424; these read SLSM…AAQQ and QAAT…GPRP. An interaction with AKT2 region spans residues 434 to 537; that stretch reads HPRPQPRPSV…PSTGGPAQKP (104 aa). In terms of domain architecture, SH3 3 spans 439 to 500; it reads PRPSVYVAIY…PGNYVAPVTR (62 aa). A compositionally biased stretch (pro residues) spans 616-625; sequence SPQPPAPLGP. The span at 681-692 shows a compositional bias: basic and acidic residues; the sequence is RPDKDGKKEKKG. Phosphoserine is present on Ser709. An SH3 4 domain is found at 781–840; the sequence is AVCERHRVVVSYPPQSEAELELKEGDIVFVHKKREDGWFKGTLQRNGKTGLFPGSFVENI.

It belongs to the SH3RF family. In terms of assembly, interacts with RAC1; in a GTP-dependent manner. Interacts with MAP3K10/MLK2 and MAP3K11/MLK3. Interacts with MAPK8IP; this interaction leads to the PJAC complex (POSH-JIP or SH3RF1/MAPK8IP apoptotic complex) with a 1:1 ratio. Interacts with SIAH1. Interacts with HERP1. Probably part of a signaling complex that may contain SH3RF1, MAPK8IP, DLK1, MAP2K4/MKK4, MAP2K7/MKK7, MAPK8/JNK1, MAPK9/JNK2, AKT1 and AKT2. Found in a complex with RAC2, MAP3K7/TAK1, MAP2K7/MKK7, MAPK8IP1/JIP1, MAPK8/JNK1 and MAPK9/JNK2. Found in a complex with RAC1, MAP3K11/MLK3, MAP2K7/MKK7, MAPK8IP1/JIP1 and MAPK8/JNK1. Interacts with SH3RF2. Phosphorylated at Ser-304 by AKT1 and AKT2. When phosphorylated, it has reduced ability to bind Rac. Post-translationally, autoubiquitinated. Ubiquitinated by SH3RF2, leading to proteasome-mediated degradation.

Its subcellular location is the cytoplasm. The protein localises to the perinuclear region. It is found in the cell projection. It localises to the lamellipodium. The protein resides in the golgi apparatus. Its subcellular location is the trans-Golgi network. It carries out the reaction S-ubiquitinyl-[E2 ubiquitin-conjugating enzyme]-L-cysteine + [acceptor protein]-L-lysine = [E2 ubiquitin-conjugating enzyme]-L-cysteine + N(6)-ubiquitinyl-[acceptor protein]-L-lysine.. It participates in protein modification; protein ubiquitination. In terms of biological role, has E3 ubiquitin-protein ligase activity. In the absence of an external substrate, it can catalyze self-ubiquitination. Stimulates ubiquitination of potassium channel KCNJ1, enhancing it's dynamin-dependent and clathrin-independent endocytosis. Acts as a scaffold protein that coordinates with MAPK8IP1/JIP1 in organizing different components of the JNK pathway, including RAC1 or RAC2, MAP3K11/MLK3 or MAP3K7/TAK1, MAP2K7/MKK7, MAPK8/JNK1 and/or MAPK9/JNK2 into a functional multiprotein complex to ensure the effective activation of the JNK signaling pathway. Regulates the differentiation of CD4(+) and CD8(+) T-cells and promotes T-helper 1 (Th1) cell differentiation. Regulates the activation of MAPK8/JNK1 and MAPK9/JNK2 in CD4(+) T-cells and the activation of MAPK8/JNK1 in CD8(+) T-cells. Plays a crucial role in the migration of neocortical neurons in the developing brain. Controls proper cortical neuronal migration and the formation of proximal cytoplasmic dilation in the leading process (PCDLP) in migratory neocortical neurons by regulating the proper localization of activated RAC1 and F-actin assembly. The polypeptide is E3 ubiquitin-protein ligase SH3RF1 (SH3RF1) (Bos taurus (Bovine)).